Consider the following 518-residue polypeptide: Protein translocase subunit SecD (518 aa).

6 helical membrane-spanning segments follow: residues 9-29, 356-376, 377-397, 406-426, 451-473, and 486-506; these read IVLSIICTVFAIICALPNFIQ, GKKAGLIGFTAVCIFMILSYG, VIGLFANIALILALLYILALL, LPGIAGIILTMGMAVDANVLI, AFATIIDSNLTTLIVAFALYIFG, and IGIISSMFSAIIITKLLIDIW.

It belongs to the SecD/SecF family. SecD subfamily. Forms a complex with SecF. Part of the essential Sec protein translocation apparatus which comprises SecA, SecYEG and auxiliary proteins SecDF-YajC and YidC.

It localises to the cell inner membrane. Its function is as follows. Part of the Sec protein translocase complex. Interacts with the SecYEG preprotein conducting channel. SecDF uses the proton motive force (PMF) to complete protein translocation after the ATP-dependent function of SecA. The protein is Protein translocase subunit SecD of Rickettsia typhi (strain ATCC VR-144 / Wilmington).